Here is a 1133-residue protein sequence, read N- to C-terminus: Myb-binding protein 1A (1133 aa).

Disordered regions lie at residues 1–62 (MKSK…ENTA), 718–764 (PLSK…DAES), 924–943 (GEEHSEEDQENGKQPASRQA), and 1111–1133 (KKVAKQKKQAAAKPMVVEDEEST). Basic and acidic residues-rich tracts occupy residues 20-35 (KAKEDRKRAKTQKSEA) and 50-60 (EKPAETEEKEN). Acidic residues-rich tracts occupy residues 725-735 (GEEESDDELDK) and 744-762 (DDSEDEDEDEEEDEGEDDA).

The protein belongs to the MYBBP1A family. Interacts with nclb.

The protein resides in the cytoplasm. The protein localises to the nucleus. It is found in the nucleolus. Functionally, has a role in rRNA biogenesis, cell proliferation and tissue growth by contributing to the localization of nclb to the nucleolus. The polypeptide is Myb-binding protein 1A (Drosophila melanogaster (Fruit fly)).